The following is a 361-amino-acid chain: Queuine tRNA-ribosyltransferase (361 aa).

The Proton acceptor role is filled by Asp92. Substrate contacts are provided by residues 92-96 (DSGGF), Asp146, Gln189, and Gly216. The RNA binding stretch occupies residues 247 to 253 (GVGKPAD). The Nucleophile role is filled by Asp266. An RNA binding; important for wobble base 34 recognition region spans residues 271-275 (TRSGR). Residues Cys304, Cys306, Cys309, and His335 each contribute to the Zn(2+) site.

The protein belongs to the queuine tRNA-ribosyltransferase family. As to quaternary structure, homodimer. Within each dimer, one monomer is responsible for RNA recognition and catalysis, while the other monomer binds to the replacement base PreQ1. Zn(2+) serves as cofactor.

It carries out the reaction 7-aminomethyl-7-carbaguanine + guanosine(34) in tRNA = 7-aminomethyl-7-carbaguanosine(34) in tRNA + guanine. It functions in the pathway tRNA modification; tRNA-queuosine biosynthesis. Functionally, catalyzes the base-exchange of a guanine (G) residue with the queuine precursor 7-aminomethyl-7-deazaguanine (PreQ1) at position 34 (anticodon wobble position) in tRNAs with GU(N) anticodons (tRNA-Asp, -Asn, -His and -Tyr). Catalysis occurs through a double-displacement mechanism. The nucleophile active site attacks the C1' of nucleotide 34 to detach the guanine base from the RNA, forming a covalent enzyme-RNA intermediate. The proton acceptor active site deprotonates the incoming PreQ1, allowing a nucleophilic attack on the C1' of the ribose to form the product. After dissociation, two additional enzymatic reactions on the tRNA convert PreQ1 to queuine (Q), resulting in the hypermodified nucleoside queuosine (7-(((4,5-cis-dihydroxy-2-cyclopenten-1-yl)amino)methyl)-7-deazaguanosine). The protein is Queuine tRNA-ribosyltransferase of Rickettsia bellii (strain OSU 85-389).